The sequence spans 205 residues: Adenylyl-sulfate kinase (205 aa).

31–38 serves as a coordination point for ATP; that stretch reads GLSGAGKS. Catalysis depends on Ser-105, which acts as the Phosphoserine intermediate.

The protein belongs to the APS kinase family.

The enzyme catalyses adenosine 5'-phosphosulfate + ATP = 3'-phosphoadenylyl sulfate + ADP + H(+). Its pathway is sulfur metabolism; hydrogen sulfide biosynthesis; sulfite from sulfate: step 2/3. Its function is as follows. Catalyzes the synthesis of activated sulfate. The polypeptide is Adenylyl-sulfate kinase (Shewanella sp. (strain MR-7)).